The following is a 426-amino-acid chain: Glucan endo-1,3-beta-glucosidase 11 (426 aa).

A signal peptide spans 1 to 30; the sequence is MELTSFHRSSLLFLISLTLIILPTTTTSIG. Asn112 carries N-linked (GlcNAc...) asparagine glycosylation. Glu121 (proton donor) is an active-site residue. A glycan (N-linked (GlcNAc...) asparagine) is linked at Asn126. The active-site Nucleophile is the Glu266. The span at 360–372 shows a compositional bias: gly residues; that stretch reads GGGTGGGNSSSGG. The segment at 360-389 is disordered; it reads GGGTGGGNSSSGGGRDKSPVFPVSPVAPDS. Asn367 carries N-linked (GlcNAc...) asparagine glycosylation. Ser398 carries GPI-anchor amidated serine lipidation. Residues 399–426 constitute a propeptide, removed in mature form; it reads ASPVTGKRKGKGAILSLVVSMLLARHLL.

Belongs to the glycosyl hydrolase 17 family.

Its subcellular location is the secreted. It is found in the cell wall. The protein resides in the cell membrane. It carries out the reaction Hydrolysis of (1-&gt;3)-beta-D-glucosidic linkages in (1-&gt;3)-beta-D-glucans.. The sequence is that of Glucan endo-1,3-beta-glucosidase 11 from Arabidopsis thaliana (Mouse-ear cress).